We begin with the raw amino-acid sequence, 328 residues long: tRNA dimethylallyltransferase (328 aa).

25-32 serves as a coordination point for ATP; the sequence is GPTAVGKT. 27–32 is a binding site for substrate; sequence TAVGKT. The tract at residues 50 to 53 is interaction with substrate tRNA; that stretch reads DSMQ.

The protein belongs to the IPP transferase family. Monomer. Requires Mg(2+) as cofactor.

It carries out the reaction adenosine(37) in tRNA + dimethylallyl diphosphate = N(6)-dimethylallyladenosine(37) in tRNA + diphosphate. In terms of biological role, catalyzes the transfer of a dimethylallyl group onto the adenine at position 37 in tRNAs that read codons beginning with uridine, leading to the formation of N6-(dimethylallyl)adenosine (i(6)A). The chain is tRNA dimethylallyltransferase from Halothermothrix orenii (strain H 168 / OCM 544 / DSM 9562).